Consider the following 245-residue polypeptide: Tryptophan synthase alpha chain (245 aa).

Active-site proton acceptor residues include glutamate 37 and aspartate 48.

This sequence belongs to the TrpA family. In terms of assembly, tetramer of two alpha and two beta chains.

It catalyses the reaction (1S,2R)-1-C-(indol-3-yl)glycerol 3-phosphate + L-serine = D-glyceraldehyde 3-phosphate + L-tryptophan + H2O. It participates in amino-acid biosynthesis; L-tryptophan biosynthesis; L-tryptophan from chorismate: step 5/5. Its function is as follows. The alpha subunit is responsible for the aldol cleavage of indoleglycerol phosphate to indole and glyceraldehyde 3-phosphate. The protein is Tryptophan synthase alpha chain of Saccharolobus solfataricus (strain ATCC 35092 / DSM 1617 / JCM 11322 / P2) (Sulfolobus solfataricus).